The following is a 362-amino-acid chain: Methionine import ATP-binding protein MetN (362 aa).

In terms of domain architecture, ABC transporter spans 23 to 258; the sequence is VRLTDVKRRF…PQAEITGSLL (236 aa). ATP is bound at residue 55–62; that stretch reads GRSGAGKS.

This sequence belongs to the ABC transporter superfamily. Methionine importer (TC 3.A.1.24) family. As to quaternary structure, the complex is composed of two ATP-binding proteins (MetN), two transmembrane proteins (MetI) and a solute-binding protein (MetQ).

Its subcellular location is the cell inner membrane. The catalysed reaction is L-methionine(out) + ATP + H2O = L-methionine(in) + ADP + phosphate + H(+). The enzyme catalyses D-methionine(out) + ATP + H2O = D-methionine(in) + ADP + phosphate + H(+). Part of the ABC transporter complex MetNIQ involved in methionine import. Responsible for energy coupling to the transport system. This chain is Methionine import ATP-binding protein MetN, found in Rhizobium johnstonii (strain DSM 114642 / LMG 32736 / 3841) (Rhizobium leguminosarum bv. viciae).